The primary structure comprises 575 residues: V-type ATP synthase alpha chain (575 aa).

Residue 238-245 coordinates ATP; it reads GPFGAGKT.

Belongs to the ATPase alpha/beta chains family.

The catalysed reaction is ATP + H2O + 4 H(+)(in) = ADP + phosphate + 5 H(+)(out). Its function is as follows. Produces ATP from ADP in the presence of a proton gradient across the membrane. The V-type alpha chain is a catalytic subunit. The chain is V-type ATP synthase alpha chain from Borreliella afzelii (strain PKo) (Borrelia afzelii).